The primary structure comprises 250 residues: 5'-nucleotidase SurE (250 aa).

Residues D8, D9, S40, and N94 each contribute to the a divalent metal cation site.

This sequence belongs to the SurE nucleotidase family. A divalent metal cation serves as cofactor.

It localises to the cytoplasm. The enzyme catalyses a ribonucleoside 5'-phosphate + H2O = a ribonucleoside + phosphate. Its function is as follows. Nucleotidase that shows phosphatase activity on nucleoside 5'-monophosphates. The sequence is that of 5'-nucleotidase SurE from Wolbachia sp. subsp. Drosophila simulans (strain wRi).